Consider the following 415-residue polypeptide: Histidine--tRNA ligase (415 aa).

This sequence belongs to the class-II aminoacyl-tRNA synthetase family. Homodimer.

It is found in the cytoplasm. The enzyme catalyses tRNA(His) + L-histidine + ATP = L-histidyl-tRNA(His) + AMP + diphosphate + H(+). In Gluconacetobacter diazotrophicus (strain ATCC 49037 / DSM 5601 / CCUG 37298 / CIP 103539 / LMG 7603 / PAl5), this protein is Histidine--tRNA ligase.